We begin with the raw amino-acid sequence, 515 residues long: GMP synthase [glutamine-hydrolyzing] (515 aa).

A Glutamine amidotransferase type-1 domain is found at 6–198; that stretch reads KVIILDFGSQ…VFKVAGLKAD (193 aa). The active-site Nucleophile is the C83. Active-site residues include H172 and E174. Residues 199 to 390 form the GMPS ATP-PPase domain; sequence WTMSSFVENC…LGLPEFIIWR (192 aa). 226-232 lines the ATP pocket; sequence SGGIDST.

Homodimer.

The enzyme catalyses XMP + L-glutamine + ATP + H2O = GMP + L-glutamate + AMP + diphosphate + 2 H(+). The protein operates within purine metabolism; GMP biosynthesis; GMP from XMP (L-Gln route): step 1/1. In terms of biological role, catalyzes the synthesis of GMP from XMP. In Maridesulfovibrio salexigens (strain ATCC 14822 / DSM 2638 / NCIMB 8403 / VKM B-1763) (Desulfovibrio salexigens), this protein is GMP synthase [glutamine-hydrolyzing].